Here is a 500-residue protein sequence, read N- to C-terminus: Palmitoleoyl-protein carboxylesterase notum1a (500 aa).

Positions 1–26 are cleaved as a signal peptide; that stretch reads MKRSLWVMQVLHWAVMLALVQCGALG. N-linked (GlcNAc...) asparagine glycosylation occurs at N101. Catalysis depends on charge relay system residues S237, D344, and H393.

The protein belongs to the pectinacetylesterase family. Notum subfamily.

The protein resides in the secreted. The catalysed reaction is [Wnt protein]-O-(9Z)-hexadecenoyl-L-serine + H2O = [Wnt protein]-L-serine + (9Z)-hexadecenoate + H(+). In terms of biological role, carboxylesterase that acts as a key negative regulator of the Wnt signaling pathway. Acts by specifically mediating depalmitoleoylation of WNT proteins. Serine palmitoleoylation of WNT proteins is required for efficient binding to frizzled receptors. The chain is Palmitoleoyl-protein carboxylesterase notum1a from Danio rerio (Zebrafish).